We begin with the raw amino-acid sequence, 225 residues long: Protein-L-isoaspartate O-methyltransferase (225 aa).

The active site involves Ser-75.

Belongs to the methyltransferase superfamily. L-isoaspartyl/D-aspartyl protein methyltransferase family.

It localises to the cytoplasm. The catalysed reaction is [protein]-L-isoaspartate + S-adenosyl-L-methionine = [protein]-L-isoaspartate alpha-methyl ester + S-adenosyl-L-homocysteine. Catalyzes the methyl esterification of L-isoaspartyl residues in peptides and proteins that result from spontaneous decomposition of normal L-aspartyl and L-asparaginyl residues. It plays a role in the repair and/or degradation of damaged proteins. The chain is Protein-L-isoaspartate O-methyltransferase from Stenotrophomonas maltophilia (strain K279a).